The sequence spans 348 residues: DnaJ homolog subfamily B member 5 (348 aa).

One can recognise a J domain in the interval 4-68 (DYYKILGIPS…KKRSLYDQYG (65 aa)).

This Mus musculus (Mouse) protein is DnaJ homolog subfamily B member 5 (Dnajb5).